The sequence spans 713 residues: MGETKVIYHLDEQETPYLVKLPVPAEKVTLGDFKNVLNKPNYKFFFKSMDDDFGVVKEEISDDNAKLPCFNGRVVCWLVSADGSQSDAGSVCADNQSDLPPPIERTGGIGDSRPPSFHPNTRGSQENLDNETETDSVVSAHRERPRRKETPEHATRLNGTSKMERRRDTGGYESSSTLMSSELDSTSFFDSDEDDSTSRFSNSTEQSSASRLMRRHKRRRRKPKAPRIERSSSFSSITDSTMSLNIITVTLNMEKYNFLGISIVGQSNERGDGGIYIGSIMKGGAVAADGRIEPGDMLLQVNDTNFENMSNDDAVRVLREIVHKPGPITLTVAKCWDPSPRNCFTLPRSEPIRPIDPAAWVSHTAAMTGSYPAYGMSPSMSTITSTSSSITSSIPETERFDDFQLSIHSDMVTIVKAMRSPESGLEVRDRMWLKITIPNAFIGSDVVDWLYHHVEGFTDRREARKYASNLLKAGYIRHTVNKITFSEQCYYIFGDLCGNMANLSLNDHDGSSGTSDQDTLAPLPHPGAAPWPIAFQYQYPLPHPYSPHPGFPDPAYSYGGGSAGSQHSEGSRSSGSNRSSTEKRKEREAKGGDTKSGGSGSESDHTTRSSVRRERAASERSVPASEHSHRSHHSIAHSIRSHHTHHSFGPPGIPPLYGAPMMMMPAPASVIGPPGAPPSRDLASVPPELTASRQSFRMAMGNPTKNSGVFDFL.

The DIX domain maps to 1–82 (MGETKVIYHL…RVVCWLVSAD (82 aa)). 2 stretches are compositionally biased toward polar residues: residues 87 to 98 (DAGSVCADNQSD) and 118 to 127 (HPNTRGSQEN). The interval 87-235 (DAGSVCADNQ…PRIERSSSFS (149 aa)) is disordered. The segment covering 140–155 (AHRERPRRKETPEHAT) has biased composition (basic and acidic residues). The segment covering 173 to 189 (ESSSTLMSSELDSTSFF) has biased composition (low complexity). Over residues 199–210 (RFSNSTEQSSAS) the composition is skewed to polar residues. Over residues 212–225 (LMRRHKRRRRKPKA) the composition is skewed to basic residues. Positions 248-333 (TVTLNMEKYN…KPGPITLTVA (86 aa)) constitute a PDZ domain. The region spanning 421–495 (PESGLEVRDR…SEQCYYIFGD (75 aa)) is the DEP domain. Positions 508–518 (HDGSSGTSDQD) are enriched in polar residues. Disordered regions lie at residues 508–527 (HDGS…PHPG) and 545–652 (YSPH…GPPG). The segment covering 564–579 (GSQHSEGSRSSGSNRS) has biased composition (low complexity). 2 stretches are compositionally biased toward basic and acidic residues: residues 580 to 593 (STEK…KGGD) and 602 to 618 (ESDH…RAAS). A compositionally biased stretch (basic residues) spans 629–646 (HRSHHSIAHSIRSHHTHH).

The protein belongs to the DSH family.

The protein localises to the cytoplasm. Functionally, involved in the signal transduction pathway mediated by multiple Wnt genes. Required during ciliogenesis for the docking of basal bodies to the apical plasma membrane. The polypeptide is Segment polarity protein dishevelled homolog DVL-3 (Xenopus tropicalis (Western clawed frog)).